We begin with the raw amino-acid sequence, 226 residues long: N-(5'-phosphoribosyl)anthranilate isomerase (226 aa).

It belongs to the TrpF family.

The catalysed reaction is N-(5-phospho-beta-D-ribosyl)anthranilate = 1-(2-carboxyphenylamino)-1-deoxy-D-ribulose 5-phosphate. It participates in amino-acid biosynthesis; L-tryptophan biosynthesis; L-tryptophan from chorismate: step 3/5. The sequence is that of N-(5'-phosphoribosyl)anthranilate isomerase (trpF) from Methanothermobacter marburgensis (strain ATCC BAA-927 / DSM 2133 / JCM 14651 / NBRC 100331 / OCM 82 / Marburg) (Methanobacterium thermoautotrophicum).